The sequence spans 138 residues: Ribulose bisphosphate carboxylase small subunit (138 aa).

It belongs to the RuBisCO small chain family. In terms of assembly, heterohexadecamer of 8 large and 8 small subunits.

Its subcellular location is the plastid. It is found in the chloroplast. Its function is as follows. RuBisCO catalyzes two reactions: the carboxylation of D-ribulose 1,5-bisphosphate, the primary event in carbon dioxide fixation, as well as the oxidative fragmentation of the pentose substrate in the photorespiration process. Both reactions occur simultaneously and in competition at the same active site. Although the small subunit is not catalytic it is essential for maximal activity. Carbon dioxide and oxygen bind in the same pocket of the enzyme in a similar manner. The polypeptide is Ribulose bisphosphate carboxylase small subunit (Galdieria sulphuraria (Red alga)).